The sequence spans 284 residues: Bifunctional protein FolD (284 aa).

NADP(+) is bound by residues 166 to 168 (GAS) and Ile232.

This sequence belongs to the tetrahydrofolate dehydrogenase/cyclohydrolase family. As to quaternary structure, homodimer.

The enzyme catalyses (6R)-5,10-methylene-5,6,7,8-tetrahydrofolate + NADP(+) = (6R)-5,10-methenyltetrahydrofolate + NADPH. It catalyses the reaction (6R)-5,10-methenyltetrahydrofolate + H2O = (6R)-10-formyltetrahydrofolate + H(+). It participates in one-carbon metabolism; tetrahydrofolate interconversion. Its function is as follows. Catalyzes the oxidation of 5,10-methylenetetrahydrofolate to 5,10-methenyltetrahydrofolate and then the hydrolysis of 5,10-methenyltetrahydrofolate to 10-formyltetrahydrofolate. This chain is Bifunctional protein FolD, found in Pseudomonas fluorescens (strain Pf0-1).